The chain runs to 532 residues: Invertase 2 (532 aa).

An N-terminal signal peptide occupies residues 1-19; that stretch reads MLLQAFLFLLAGFAAKISA. Residue asparagine 23 is glycosylated (N-linked (GlcNAc...) asparagine). Residues 39–42 and glutamine 60 each bind substrate; that span reads WMND. Aspartate 42 is a catalytic residue. Asparagine 64 is a glycosylation site (N-linked (GlcNAc...) asparagine; partial). N-linked (GlcNAc...) asparagine glycosylation is present at asparagine 97. 102 to 103 lines the substrate pocket; it reads FS. 2 N-linked (GlcNAc...) asparagine glycosylation sites follow: asparagine 111 and asparagine 118. Residue asparagine 165 is glycosylated (N-linked (GlcNAc...) asparagine; partial). Residues 170-171 and glutamate 223 each bind substrate; that span reads RD. Asparagine 266 and asparagine 275 each carry an N-linked (GlcNAc...) asparagine; partial glycan. Tryptophan 311 provides a ligand contact to substrate. N-linked (GlcNAc...) asparagine glycans are attached at residues asparagine 356, asparagine 369, asparagine 384, and asparagine 398. Asparagine 512 is a glycosylation site (N-linked (GlcNAc...) asparagine; partial).

The protein belongs to the glycosyl hydrolase 32 family. Isoform Secreted is glycosylated. Isoform Intracellular is not glycosylated.

The protein localises to the cytoplasm. The protein resides in the secreted. It carries out the reaction Hydrolysis of terminal non-reducing beta-D-fructofuranoside residues in beta-D-fructofuranosides.. The sequence is that of Invertase 2 (SUC2) from Saccharomyces cerevisiae (strain ATCC 204508 / S288c) (Baker's yeast).